We begin with the raw amino-acid sequence, 436 residues long: O-phosphoseryl-tRNA(Sec) selenium transferase (436 aa).

Residues 1–44 (MLDFNIEGLIPKNMEKRGELVLNEYLKEIEDVFNHRKIPENGID) are tetramerization. A pyridoxal 5'-phosphate-binding site is contributed by R72. The segment at 93 to 103 (GRSGNLVDPQP) is phosphate loop (P-loop). Residues R94, S95, and Q102 each contribute to the substrate site. An N6-(pyridoxal phosphate)lysine modification is found at K278. Substrate is bound at residue R307.

Belongs to the SepSecS family. Homotetramer. Requires pyridoxal 5'-phosphate as cofactor.

It carries out the reaction O-phospho-L-seryl-tRNA(Sec) + selenophosphate + H2O = L-selenocysteinyl-tRNA(Sec) + 2 phosphate. The protein operates within aminoacyl-tRNA biosynthesis; selenocysteinyl-tRNA(Sec) biosynthesis; selenocysteinyl-tRNA(Sec) from L-seryl-tRNA(Sec) (archaeal/eukaryal route): step 2/2. In terms of biological role, converts O-phosphoseryl-tRNA(Sec) to selenocysteinyl-tRNA(Sec) required for selenoprotein biosynthesis. The chain is O-phosphoseryl-tRNA(Sec) selenium transferase (spcS) from Methanococcus maripaludis (strain DSM 14266 / JCM 13030 / NBRC 101832 / S2 / LL).